Consider the following 708-residue polypeptide: Matrix metalloproteinase-9 (708 aa).

Residues 1–19 (MSPWQPLLLVLLALGYSFA) form the signal peptide. The propeptide at 20–107 (APHQRQPTYV…PRCGVPDVGK (88 aa)) is activation peptide. N-linked (GlcNAc...) asparagine glycosylation is present at Asn-39. The Cysteine switch signature appears at 98–105 (PRCGVPDV). Residue Cys-100 participates in Zn(2+) binding. Asn-121 carries N-linked (GlcNAc...) asparagine glycosylation. Positions 132 and 166 each coordinate Ca(2+). His-176 and Asp-178 together coordinate Zn(2+). The Ca(2+) site is built by Asp-183, Gly-184, Asp-186, and Leu-188. Position 191 (His-191) interacts with Zn(2+). Ca(2+)-binding residues include Gly-198, Gln-200, and Asp-202. His-204 is a binding site for Zn(2+). Ca(2+) is bound by residues Asp-206, Asp-207, and Glu-209. Fibronectin type-II domains are found at residues 226 to 274 (ANGA…FCPS), 284 to 332 (GDGK…FCPT), and 343 to 391 (SAGE…FCPD). Cystine bridges form between Cys-231–Cys-257, Cys-245–Cys-272, Cys-289–Cys-315, Cys-303–Cys-330, Cys-348–Cys-374, and Cys-362–Cys-389. His-402 serves as a coordination point for Zn(2+). Glu-403 is a catalytic residue. Residues His-406 and His-412 each coordinate Zn(2+). Residues 441–520 (HHLYGRGSKP…SSTPDDNPCN (80 aa)) form a disordered region. Low complexity predominate over residues 480–490 (PTGGPTVAPTG). Residues 491–502 (APSPGPTGPPTA) are compositionally biased toward pro residues. The cysteines at positions 519 and 707 are disulfide-linked. Hemopexin repeat units follow at residues 521–566 (VDVF…WPAF), 567–611 (PSKL…GLGS), 613–660 (VTLV…FSGV), and 661–707 (PWNS…LLQC).

This sequence belongs to the peptidase M10A family. As to quaternary structure, exists as monomer or homodimer; disulfide-linked. Also exists as heterodimer with LCN2. Macrophages and transformed cell lines produce only the monomeric form. Interacts with ECM1. The cofactor is Zn(2+). It depends on Ca(2+) as a cofactor. Post-translationally, N- and O-glycosylated.

Its subcellular location is the secreted. It is found in the extracellular space. It localises to the extracellular matrix. The catalysed reaction is Cleavage of gelatin types I and V and collagen types IV and V.. In terms of biological role, matrix metalloproteinase that plays an essential role in local proteolysis of the extracellular matrix and in leukocyte migration. Could play a role in bone osteoclastic resorption. Cleaves KiSS1 at a Gly-|-Leu bond. Cleaves NINJ1 to generate the Secreted ninjurin-1 form. Cleaves type IV and type V collagen into large C-terminal three quarter fragments and shorter N-terminal one quarter fragments. Degrades fibronectin but not laminin or Pz-peptide. The sequence is that of Matrix metalloproteinase-9 (Mmp9) from Rattus norvegicus (Rat).